We begin with the raw amino-acid sequence, 235 residues long: MMIKLIVNADDFGLTEGTNYGIIDGHINGLVNSTTMMMNMPGTEHAVRLAKEYNLLGVGVHLVLTAGEPLLKDVPSLVGENGSFHKQSVVREGNINPEEVEREWTAQIEKFLSYGLTPTHLDSHHHVHGLPILHDVLERLAAKYNVPIRRCEEDRAVHPFSDVFYSDFYADGVTEDYFVKLKERVQGEQTVEIMVHPAYIDPELVKRSSYVMDRVKELRILTESELPEGIELVKF.

Mg(2+) contacts are provided by His-61 and His-124.

It belongs to the YdjC deacetylase family. It depends on Mg(2+) as a cofactor.

Functionally, probably catalyzes the deacetylation of acetylated carbohydrates an important step in the degradation of oligosaccharides. The chain is Carbohydrate deacetylase from Bacillus cereus (strain B4264).